Reading from the N-terminus, the 555-residue chain is MARVEL domain-containing protein 2 (555 aa).

Positions 1-20 (MSSSDARSRIRDRGYSEVPR) are enriched in basic and acidic residues. The segment at 1–71 (MSSSDARSRI…FYSSDTEEPA (71 aa)) is disordered. Residues 1 to 191 (MSSSDARSRI…YMKSWAGLLR (191 aa)) are Cytoplasmic-facing. A compositionally biased stretch (pro residues) spans 46 to 59 (PLPPPPLPLQPPFG). Phosphoserine is present on residues Ser117, Ser121, and Ser158. The disordered stretch occupies residues 118-142 (PPASPARANHHPYKDPSRGSQGTFN). At Thr163 the chain carries Phosphothreonine. Residues 185–364 (SWAGLLRILG…SALVCLKLWR (180 aa)) form the MARVEL domain. Residues 192 to 212 (ILGVVELLLGAGVFACVTAYI) form a helical membrane-spanning segment. At 213-251 (HKDNEWYNLFGYTQPYGMGGLGSLGNTYGGYYYSGPKTP) the chain is on the extracellular side. Residues 252-272 (FVLVVAGLAWITTIIILVLGM) form a helical membrane-spanning segment. The Cytoplasmic portion of the chain corresponds to 273-288 (SMYYRTILLDSNWWPL). The chain crosses the membrane as a helical span at residues 289–309 (TEFGVNVALFILYMAAAIVYV). The Extracellular segment spans residues 310 to 338 (NDTNRGGLCYYPLFNTPMNAMFCRVEGGQ). Residues 339-359 (IAAMIFLFVTMIVYLVSALVC) traverse the membrane as a helical segment. Residues 360-555 (LKLWRHEAAR…VMNWDTQGYP (196 aa)) are Cytoplasmic-facing. Ser384 bears the Phosphoserine mark. A Glycyl lysine isopeptide (Lys-Gly) (interchain with G-Cter in ubiquitin) cross-link involves residue Lys408. Positions 437–548 (PDYVAKYPVI…RIQEYDKVMN (112 aa)) constitute an OCEL domain. Positions 521-545 (EKKERCDYLKNKLSHIKQRIQEYDK) form a coiled coil.

It belongs to the ELL/occludin family. In terms of assembly, interacts with TJP1. Interacts with the ubiquitin ligase ITCH. Interacts (via C-terminal cytoplasmic domain) with LSR (via the cytoplasmic domain), ILDR1 and ILDR2; the interaction is required to recruit MARVELD2 to tricellular contacts. In terms of processing, ubiquitinated by ITCH; but this ubiquitination does not lead to proteasomal degradation. Polyubiquitinated at Lys-408 via 'Lys-63'-linked ubiquitin chains; deubiquitinated by USP53. Phosphorylated. As to expression, detected in small intestine, stomach and kidney, in epithelial cells. Detected in pancreas, retina and lung, and in stria vascularis, utricle and the organ of Conti in the inner ear (at protein level). Predominantly detected in small intestine, lung and kidney, with lower levels in liver, testis and brain. In colon, expressed in the entire crypts.

The protein resides in the cell membrane. It is found in the cell junction. Its subcellular location is the tight junction. Plays a role in the formation of tricellular tight junctions and of epithelial barriers. Required for normal hearing via its role in the separation of the endolymphatic and perilymphatic spaces of the organ of Corti in the inner ear, and for normal survival of hair cells in the organ of Corti. In Mus musculus (Mouse), this protein is MARVEL domain-containing protein 2.